The sequence spans 199 residues: Protein-methionine-sulfoxide reductase heme-binding subunit MsrQ (199 aa).

5 helical membrane passes run 13 to 33, 79 to 99, 120 to 140, 147 to 167, and 169 to 189; these read VLLH…VDQG, LLGL…ALLE, LGII…QIMM, WQKL…HYLW, and VKTL…LLLL.

It belongs to the MsrQ family. Heterodimer of a catalytic subunit (MsrP) and a heme-binding subunit (MsrQ). It depends on FMN as a cofactor. Heme b serves as cofactor.

It is found in the cell inner membrane. Functionally, part of the MsrPQ system that repairs oxidized periplasmic proteins containing methionine sulfoxide residues (Met-O), using respiratory chain electrons. Thus protects these proteins from oxidative-stress damage caused by reactive species of oxygen and chlorine generated by the host defense mechanisms. MsrPQ is essential for the maintenance of envelope integrity under bleach stress, rescuing a wide series of structurally unrelated periplasmic proteins from methionine oxidation. MsrQ provides electrons for reduction to the reductase catalytic subunit MsrP, using the quinone pool of the respiratory chain. This chain is Protein-methionine-sulfoxide reductase heme-binding subunit MsrQ, found in Pectobacterium atrosepticum (strain SCRI 1043 / ATCC BAA-672) (Erwinia carotovora subsp. atroseptica).